A 125-amino-acid polypeptide reads, in one-letter code: MQAVAAAAGMMRRGSLTIDPAGEEEAPAERVGRLVRESPVVVFARRGCYMAHVMRRLLAAVGAHATVIELEGGAAEEEEAALGGGAALPALFVGGDPVGGLEGLMGLHLSGRLVPRLREVGALCT.

The region spanning 28–124 (AERVGRLVRE…PRLREVGALC (97 aa)) is the Glutaredoxin domain. Cys48 lines the [2Fe-2S] cluster pocket.

The protein belongs to the glutaredoxin family. CC-type subfamily.

It is found in the cytoplasm. Its function is as follows. May only reduce GSH-thiol disulfides, but not protein disulfides. The polypeptide is Monothiol glutaredoxin-S2 (GRXS2) (Oryza sativa subsp. japonica (Rice)).